Consider the following 284-residue polypeptide: Kynurenine formamidase avaC (284 aa).

The HGGXW signature appears at 47–51 (HGGGW). Serine 130 (nucleophile) is an active-site residue.

This sequence belongs to the kynurenine formamidase family.

The enzyme catalyses N-formyl-L-kynurenine + H2O = L-kynurenine + formate + H(+). It functions in the pathway secondary metabolite metabolism. Its function is as follows. Kynurenine formamidase; part of the cluster that mediates the biosynthesis of a highly modified cyclo-arginine-tryptophan dipeptide (cRW). Within the pathway, avaC catalyzes the deformylation of the cyclo-Arg-formylkynurenine iketopiperazine (DKP), produced by the FAD-dependent monooxygenase avaB. The first step of the pathway is perfornmed by the arginine-containing cyclodipeptide synthase (RCPDS) avaA that acts as the scaffold-generating enzyme and is responsible for formation of the cyclo-Arg-Trp (cRW) diketopiperazine. AvaB then acts as a multifunctional flavoenzyme that is responsible for generating the cyclo-Arg-formylkynurenine DKP, which can be deformylated by avaC. AvaB then further catalyzes an additional N-oxidation followed by cyclization and dehydration. The next step is an N-acetylation of the guanidine group catalyzed by the arginine N-acetyltransferase avaD. The roles of the additional enzymes identified within the ava cluster still have to be determined. The sequence is that of Kynurenine formamidase avaC from Aspergillus versicolor.